The primary structure comprises 105 residues: Large ribosomal subunit protein eL36 (105 aa).

Residues 86–105 are disordered; that stretch reads QAGKKKRDDIANINRKASAK.

It belongs to the eukaryotic ribosomal protein eL36 family.

This chain is Large ribosomal subunit protein eL36 (rpl36), found in Dictyostelium discoideum (Social amoeba).